A 479-amino-acid polypeptide reads, in one-letter code: Serine--tRNA ligase, mitochondrial (479 aa).

Residues 1-42 (MRLTNRRFSTFLGNALPSKKKGFIFMSQLLYLRTFSTHTSYL) constitute a mitochondrion transit peptide. 287–289 (TAE) provides a ligand contact to L-serine. Residue 317–319 (RRE) participates in ATP binding. An L-serine-binding site is contributed by glutamate 340. 404 to 407 (EITS) lines the ATP pocket. Threonine 438 contacts L-serine.

It belongs to the class-II aminoacyl-tRNA synthetase family. Type-1 seryl-tRNA synthetase subfamily. As to quaternary structure, homodimer. The tRNA molecule probably binds across the dimer.

It localises to the mitochondrion matrix. It carries out the reaction tRNA(Ser) + L-serine + ATP = L-seryl-tRNA(Ser) + AMP + diphosphate + H(+). In terms of biological role, catalyzes the attachment of serine to tRNA(Ser). Is also probably able to aminoacylate tRNA(Sec) with serine, to form the misacylated tRNA L-seryl-tRNA(Sec), which will be further converted into selenocysteinyl-tRNA(Sec). This chain is Serine--tRNA ligase, mitochondrial (dia4), found in Schizosaccharomyces pombe (strain 972 / ATCC 24843) (Fission yeast).